A 302-amino-acid chain; its full sequence is Phospho-N-acetylmuramoyl-pentapeptide-transferase (302 aa).

Helical transmembrane passes span 1 to 21 (MIAA…NLFR), 42 to 62 (GTPT…GVLS), 67 to 87 (VILT…FLSI), 101 to 121 (ALLQ…ETAV), 123 to 143 (FFGI…IVIV), 154 to 174 (GLDG…WFFL), 178 to 198 (GFSE…LIFN), 204 to 224 (IFMG…VSVL), 229 to 249 (FYLI…ILQI), and 279 to 299 (IVAV…EVFG).

The protein belongs to the glycosyltransferase 4 family. MraY subfamily. Mg(2+) is required as a cofactor.

Its subcellular location is the cell inner membrane. It carries out the reaction UDP-N-acetyl-alpha-D-muramoyl-L-alanyl-gamma-D-glutamyl-meso-2,6-diaminopimeloyl-D-alanyl-D-alanine + di-trans,octa-cis-undecaprenyl phosphate = di-trans,octa-cis-undecaprenyl diphospho-N-acetyl-alpha-D-muramoyl-L-alanyl-D-glutamyl-meso-2,6-diaminopimeloyl-D-alanyl-D-alanine + UMP. It functions in the pathway cell wall biogenesis; peptidoglycan biosynthesis. Catalyzes the initial step of the lipid cycle reactions in the biosynthesis of the cell wall peptidoglycan: transfers peptidoglycan precursor phospho-MurNAc-pentapeptide from UDP-MurNAc-pentapeptide onto the lipid carrier undecaprenyl phosphate, yielding undecaprenyl-pyrophosphoryl-MurNAc-pentapeptide, known as lipid I. This is Phospho-N-acetylmuramoyl-pentapeptide-transferase from Thermotoga neapolitana (strain ATCC 49049 / DSM 4359 / NBRC 107923 / NS-E).